The primary structure comprises 377 residues: Citrate synthase (377 aa).

Catalysis depends on residues H220, H259, and D313.

This sequence belongs to the citrate synthase family. As to quaternary structure, homodimer.

The catalysed reaction is oxaloacetate + acetyl-CoA + H2O = citrate + CoA + H(+). Its pathway is carbohydrate metabolism; tricarboxylic acid cycle; isocitrate from oxaloacetate: step 1/2. In terms of biological role, might regulate the synthesis and function of enzymes involved in later enzymatic steps of Krebs cycle. Loss in activity results in sporulation defect. This chain is Citrate synthase (gltA), found in Deinococcus radiodurans (strain ATCC 13939 / DSM 20539 / JCM 16871 / CCUG 27074 / LMG 4051 / NBRC 15346 / NCIMB 9279 / VKM B-1422 / R1).